Consider the following 603-residue polypeptide: UvrABC system protein C (603 aa).

The GIY-YIG domain maps to 13–92 (SSPGVYLMKD…IKQHHPKYNV (80 aa)). The region spanning 205-240 (EEVVKDLEKVIQKASDNLEFEQAANYYRTLSLIKQA) is the UVR domain.

It belongs to the UvrC family. Interacts with UvrB in an incision complex.

The protein localises to the cytoplasm. Its function is as follows. The UvrABC repair system catalyzes the recognition and processing of DNA lesions. UvrC both incises the 5' and 3' sides of the lesion. The N-terminal half is responsible for the 3' incision and the C-terminal half is responsible for the 5' incision. The polypeptide is UvrABC system protein C (Chlamydia pneumoniae (Chlamydophila pneumoniae)).